Consider the following 289-residue polypeptide: tRNA pseudouridine synthase B (289 aa).

The Nucleophile role is filled by Asp-38.

The protein belongs to the pseudouridine synthase TruB family. Type 1 subfamily.

It catalyses the reaction uridine(55) in tRNA = pseudouridine(55) in tRNA. Functionally, responsible for synthesis of pseudouridine from uracil-55 in the psi GC loop of transfer RNAs. This chain is tRNA pseudouridine synthase B, found in Clostridium novyi (strain NT).